Reading from the N-terminus, the 181-residue chain is uncharacterized protein (181 aa).

This is an uncharacterized protein from Acanthamoeba polyphaga (Amoeba).